Here is a 361-residue protein sequence, read N- to C-terminus: Spermidine/putrescine import ATP-binding protein PotA (361 aa).

The ABC transporter domain occupies 4-234; the sequence is LELRDVTRRF…PANRFIADFI (231 aa). Position 36–43 (36–43) interacts with ATP; that stretch reads GPSGCGKT.

It belongs to the ABC transporter superfamily. Spermidine/putrescine importer (TC 3.A.1.11.1) family. As to quaternary structure, the complex is composed of two ATP-binding proteins (PotA), two transmembrane proteins (PotB and PotC) and a solute-binding protein (PotD).

It localises to the cell inner membrane. The enzyme catalyses ATP + H2O + polyamine-[polyamine-binding protein]Side 1 = ADP + phosphate + polyamineSide 2 + [polyamine-binding protein]Side 1.. Functionally, part of the ABC transporter complex PotABCD involved in spermidine/putrescine import. Responsible for energy coupling to the transport system. This chain is Spermidine/putrescine import ATP-binding protein PotA, found in Nitrosomonas europaea (strain ATCC 19718 / CIP 103999 / KCTC 2705 / NBRC 14298).